We begin with the raw amino-acid sequence, 184 residues long: NADH dehydrogenase [ubiquinone] 1 alpha subcomplex assembly factor 3 (184 aa).

The protein belongs to the NDUFAF3 family. As to quaternary structure, interacts with NDUFAF4, NDUFS2 and NDUFS3.

It is found in the nucleus. The protein localises to the mitochondrion inner membrane. Its function is as follows. Essential factor for the assembly of mitochondrial NADH:ubiquinone oxidoreductase complex (complex I). The chain is NADH dehydrogenase [ubiquinone] 1 alpha subcomplex assembly factor 3 (NDUFAF3) from Homo sapiens (Human).